The primary structure comprises 308 residues: Serine/threonine-protein phosphatase PP1 (308 aa).

Mn(2+) contacts are provided by D64, H66, D92, and N124. H125 (proton donor) is an active-site residue. Mn(2+) is bound by residues H173 and H248.

It belongs to the PPP phosphatase family. PP-1 subfamily. The cofactor is Mn(2+).

It is found in the cytoplasm. The enzyme catalyses O-phospho-L-seryl-[protein] + H2O = L-seryl-[protein] + phosphate. The catalysed reaction is O-phospho-L-threonyl-[protein] + H2O = L-threonyl-[protein] + phosphate. The protein is Serine/threonine-protein phosphatase PP1 (pph-3) of Neurospora crassa (strain ATCC 24698 / 74-OR23-1A / CBS 708.71 / DSM 1257 / FGSC 987).